Here is a 182-residue protein sequence, read N- to C-terminus: T-cell surface glycoprotein CD3 gamma chain (182 aa).

Positions 1–22 (MEQGKHLAGLILAITLLQGTMA) are cleaved as a signal peptide. An Ig-like domain is found at 23–98 (QLKEGKHSVL…GSKENSKRLQ (76 aa)). Residues 23–116 (QLKEGKHSVL…CIELNSATVS (94 aa)) are Extracellular-facing. Cys46 and Cys87 are joined by a disulfide. Asn66 carries an N-linked (GlcNAc...) asparagine glycan. Residues 117–137 (GFIFTEIISLFFLAVGVYFIA) traverse the membrane as a helical segment. Residues 138-182 (GQDGVRQSRASDKQTLLSNDQLYQPLKDREDDQYSHLQGNNSRKN) are Cytoplasmic-facing. Ser145 carries the post-translational modification Phosphoserine. Phosphoserine; by PKC is present on Ser148. Residues 149–177 (DKQTLLSNDQLYQPLKDREDDQYSHLQGN) form the ITAM domain. Residues 153-154 (LL) carry the Di-leucine motif motif.

The TCR-CD3 complex is composed of a CD3D/CD3E and a CD3G/CD3E heterodimers that preferentially associate with TCRalpha and TCRbeta, respectively, to form TCRalpha/CD3E/CD3G and TCRbeta/CD3G/CD3E trimers. In turn, the hexamer interacts with CD3Z homodimer to form the TCR-CD3 complex. Alternatively, TCRalpha and TCRbeta can be replaced by TCRgamma and TCRdelta. Post-translationally, phosphorylated on Tyr residues after T-cell receptor triggering by LCK in association with CD4/CD8. Phosphorylated also by PKC; leading to the TCR complex down-regulation. Phosphorylated on Tyr residues after T-cell receptor triggering by LCK in association with CD4/CD8.

It is found in the cell membrane. Its function is as follows. Part of the TCR-CD3 complex present on T-lymphocyte cell surface that plays an essential role in adaptive immune response. When antigen presenting cells (APCs) activate T-cell receptor (TCR), TCR-mediated signals are transmitted across the cell membrane by the CD3 chains CD3D, CD3E, CD3G and CD3Z. All CD3 chains contain immunoreceptor tyrosine-based activation motifs (ITAMs) in their cytoplasmic domain. Upon TCR engagement, these motifs become phosphorylated by Src family protein tyrosine kinases LCK and FYN, resulting in the activation of downstream signaling pathways. In addition to this role of signal transduction in T-cell activation, CD3G plays an essential role in the dynamic regulation of TCR expression at the cell surface. Indeed, constitutive TCR cycling is dependent on the di-leucine-based (diL) receptor-sorting motif present in CD3G. This Sus scrofa (Pig) protein is T-cell surface glycoprotein CD3 gamma chain (CD3G).